The primary structure comprises 303 residues: tRNA pseudouridine synthase B (303 aa).

Asp47 acts as the Nucleophile in catalysis.

This sequence belongs to the pseudouridine synthase TruB family. Type 1 subfamily.

The catalysed reaction is uridine(55) in tRNA = pseudouridine(55) in tRNA. Functionally, responsible for synthesis of pseudouridine from uracil-55 in the psi GC loop of transfer RNAs. The polypeptide is tRNA pseudouridine synthase B (Roseobacter denitrificans (strain ATCC 33942 / OCh 114) (Erythrobacter sp. (strain OCh 114))).